Here is a 404-residue protein sequence, read N- to C-terminus: Metacaspase-1 (404 aa).

Positions 1–97 (MHHHHQQPSY…NPQAFGHGAP (97 aa)) are disordered. Catalysis depends on residues H195 and C251.

It belongs to the peptidase C14B family.

Its function is as follows. Involved in cell death (apoptosis). The protein is Metacaspase-1 (casA) of Emericella nidulans (strain FGSC A4 / ATCC 38163 / CBS 112.46 / NRRL 194 / M139) (Aspergillus nidulans).